The sequence spans 272 residues: Undecaprenyl-diphosphatase (272 aa).

7 helical membrane passes run 2 to 22 (FDII…FLPI), 43 to 63 (FINM…ILLY), 82 to 102 (WQLW…GLPL), 110 to 130 (LHTP…FIIL), 185 to 205 (YVAT…VSIL), 224 to 244 (VLMT…KWLL), and 252 to 272 (FKPF…VMFI).

It belongs to the UppP family.

It localises to the cell membrane. The catalysed reaction is di-trans,octa-cis-undecaprenyl diphosphate + H2O = di-trans,octa-cis-undecaprenyl phosphate + phosphate + H(+). In terms of biological role, catalyzes the dephosphorylation of undecaprenyl diphosphate (UPP). Confers resistance to bacitracin. In Lacticaseibacillus paracasei (strain ATCC 334 / BCRC 17002 / CCUG 31169 / CIP 107868 / KCTC 3260 / NRRL B-441) (Lactobacillus paracasei), this protein is Undecaprenyl-diphosphatase.